Here is a 343-residue protein sequence, read N- to C-terminus: Arginine-hydroxylase NDUFAF5, mitochondrial (343 aa).

Residues 1–29 constitute a mitochondrion transit peptide; the sequence is MLRKVVLLRLCPLLGRPAVSASSGSRREV.

Belongs to the methyltransferase superfamily. In terms of assembly, interacts with NDUFAF8, leading to stabilize NDUFAF5. Interacts with NDUFS7. Interacts with PYURF (via TRM112 domain); the interaction is direct and stabilizes NDUFAF5 protein.

Its subcellular location is the mitochondrion inner membrane. Arginine hydroxylase that mediates hydroxylation of 'Arg-122' of NDUFS7 and is involved in the assembly of mitochondrial NADH:ubiquinone oxidoreductase complex (complex I, MT-ND1) at early stages. May also have methyltransferase activity. The sequence is that of Arginine-hydroxylase NDUFAF5, mitochondrial from Mus musculus (Mouse).